A 314-amino-acid chain; its full sequence is BRCA2 and CDKN1A-interacting protein (314 aa).

Residues 1–56 (MASRSKRRAVESGVPQPPDPPVQRDEEEEKEVENEDEDDDDSDKEKDEEDEVIDEE) form a disordered region. The span at 25-56 (DEEEEKEVENEDEDDDDSDKEKDEEDEVIDEE) shows a compositional bias: acidic residues. 2 positions are modified to phosphoserine: Ser-42 and Ser-112. An interaction with BRCA2 region spans residues 59-167 (IEFEAYSLSD…EKSMVEQLDK (109 aa)). The tract at residues 161–259 (MVEQLDKFLN…NAEEEFFYEK (99 aa)) is interaction with CDKN1A. Residue Ser-281 is modified to Phosphoserine.

The protein belongs to the BCP1 family. In terms of assembly, interacts with BRCA2, CDKN1A and MTDH/LYRIC. Isoform 2/alpha, but not isoform 1/beta, interacts with DCTN1/p150-glued and ACTR1A/ARP1. Both isoform 1 and isoform 2 interact with alpha-, beta- and gamma-tubulins. Interacts with TENT5C; the interaction has no effect on TENT5C poly(A) polymerase function. Expressed at high levels in testis and skeletal muscle and at lower levels in brain, heart, kidney, liver, lung, ovary, pancreas, placenta, and spleen.

It is found in the nucleus. Its subcellular location is the cytoplasm. The protein resides in the cytoskeleton. It localises to the microtubule organizing center. The protein localises to the centrosome. It is found in the centriole. Its subcellular location is the spindle pole. Functionally, during interphase, required for microtubule organizing and anchoring activities. During mitosis, required for the organization and stabilization of the spindle pole. Isoform 2/alpha is particularly important for the regulation of microtubule anchoring, microtubule stability, spindle architecture and spindle orientation, compared to isoform 1/beta. May promote cell cycle arrest by enhancing the inhibition of CDK2 activity by CDKN1A. May be required for repair of DNA damage by homologous recombination in conjunction with BRCA2. May not be involved in non-homologous end joining (NHEJ). This Homo sapiens (Human) protein is BRCA2 and CDKN1A-interacting protein (BCCIP).